Here is a 492-residue protein sequence, read N- to C-terminus: N-succinylglutamate 5-semialdehyde dehydrogenase (492 aa).

220-225 (GSANTG) provides a ligand contact to NAD(+). Active-site residues include Glu-243 and Cys-277.

The protein belongs to the aldehyde dehydrogenase family. AstD subfamily.

It catalyses the reaction N-succinyl-L-glutamate 5-semialdehyde + NAD(+) + H2O = N-succinyl-L-glutamate + NADH + 2 H(+). Its pathway is amino-acid degradation; L-arginine degradation via AST pathway; L-glutamate and succinate from L-arginine: step 4/5. Functionally, catalyzes the NAD-dependent reduction of succinylglutamate semialdehyde into succinylglutamate. This is N-succinylglutamate 5-semialdehyde dehydrogenase from Escherichia coli (strain ATCC 8739 / DSM 1576 / NBRC 3972 / NCIMB 8545 / WDCM 00012 / Crooks).